We begin with the raw amino-acid sequence, 261 residues long: 3-deoxy-manno-octulosonate cytidylyltransferase (261 aa).

It belongs to the KdsB family.

It is found in the cytoplasm. It carries out the reaction 3-deoxy-alpha-D-manno-oct-2-ulosonate + CTP = CMP-3-deoxy-beta-D-manno-octulosonate + diphosphate. The protein operates within nucleotide-sugar biosynthesis; CMP-3-deoxy-D-manno-octulosonate biosynthesis; CMP-3-deoxy-D-manno-octulosonate from 3-deoxy-D-manno-octulosonate and CTP: step 1/1. It functions in the pathway bacterial outer membrane biogenesis; lipopolysaccharide biosynthesis. In terms of biological role, activates KDO (a required 8-carbon sugar) for incorporation into bacterial lipopolysaccharide in Gram-negative bacteria. This Dechloromonas aromatica (strain RCB) protein is 3-deoxy-manno-octulosonate cytidylyltransferase.